The sequence spans 73 residues: DNA-directed RNA polymerase subunit Rpo10 (73 aa).

The Zn(2+) site is built by Cys7, Cys10, Cys44, and Cys45.

Belongs to the archaeal Rpo10/eukaryotic RPB10 RNA polymerase subunit family. As to quaternary structure, part of the RNA polymerase complex. Forms an Rpo3-Rpo10-Rpo11-Rpo12 complex upon coexpression. The cofactor is Zn(2+).

The protein localises to the cytoplasm. It carries out the reaction RNA(n) + a ribonucleoside 5'-triphosphate = RNA(n+1) + diphosphate. In terms of biological role, DNA-dependent RNA polymerase (RNAP) catalyzes the transcription of DNA into RNA using the four ribonucleoside triphosphates as substrates. In Methanocaldococcus jannaschii (strain ATCC 43067 / DSM 2661 / JAL-1 / JCM 10045 / NBRC 100440) (Methanococcus jannaschii), this protein is DNA-directed RNA polymerase subunit Rpo10.